We begin with the raw amino-acid sequence, 193 residues long: Ras-like protein 2 (193 aa).

12 to 19 (GGGGVGKS) serves as a coordination point for GTP. The Effector region motif lies at 34–42 (YDPTIEDSY). Residues 59–63 (DTAGQ) and 118–121 (NKCD) each bind GTP. Cys-190 carries the cysteine methyl ester modification. The S-geranylgeranyl cysteine moiety is linked to residue Cys-190. A propeptide spans 191-193 (KLL) (removed in mature form).

Belongs to the small GTPase superfamily. Ras family.

It localises to the cell membrane. It carries out the reaction GTP + H2O = GDP + phosphate + H(+). Ras proteins bind GDP/GTP and possess intrinsic GTPase activity. In Physarum polycephalum (Slime mold), this protein is Ras-like protein 2 (RAS-2).